A 1386-amino-acid chain; its full sequence is Lysophospholipase NTE1 (1386 aa).

The Cytoplasmic segment spans residues 1 to 19 (MGPEFEDSIPLVHSDNRTT). Residues 20–40 (TIYSVYIIISDIFSFVQWLLF) traverse the membrane as a helical segment. The Lumenal segment spans residues 41 to 65 (KVLNLIIIDSPAFVLRLLSKNFEIN). Residues 66-86 (LHLSSILATLIGVSVVTYLVI) traverse the membrane as a helical segment. Topologically, residues 87–1386 (RYKFLTGYSH…KKILYRRNSI (1300 aa)) are cytoplasmic. The tract at residues 394–416 (EAEAENLPKKLKHHHRNQLQRTT) is disordered. Residues 402–411 (KKLKHHHRNQ) are compositionally biased toward basic residues. Residues 577-701 (KRLL…LKNL) and 697-821 (KLKN…VASK) contribute to the a nucleoside 3',5'-cyclic phosphate site. The PNPLA domain maps to 1081-1245 (LVLGGGGSRG…LDNLPVNEMK (165 aa)). Residues 1085–1090 (GGGSRG) carry the GXGXXG motif. Positions 1112–1116 (GTSIG) match the GXSXG motif. Residue S1114 is the Nucleophile of the active site. D1232 serves as the catalytic Proton acceptor. Positions 1232–1234 (DGG) match the DGA/G motif.

Belongs to the NTE family.

The protein localises to the endoplasmic reticulum membrane. It carries out the reaction a 1-acyl-sn-glycero-3-phosphocholine + H2O = sn-glycerol 3-phosphocholine + a fatty acid + H(+). Its activity is regulated as follows. Inhibited by organophosphorus esters. Functionally, intracellular phospholipase B that catalyzes the double deacylation of phosphatidylcholine (PC) to glycerophosphocholine (GroPCho). Plays an important role in membrane lipid homeostasis. Responsible for the rapid PC turnover in response to inositol, elevated temperatures, or when choline is present in the growth medium. The sequence is that of Lysophospholipase NTE1 (NTE1) from Candida albicans (strain SC5314 / ATCC MYA-2876) (Yeast).